We begin with the raw amino-acid sequence, 157 residues long: Endoribonuclease YbeY (157 aa).

H111, H115, and H121 together coordinate Zn(2+). The segment at 136 to 157 is disordered; that stretch reads ELLAELGHPDPYADDETDSITH. Residues 147-157 are compositionally biased toward acidic residues; it reads YADDETDSITH.

The protein belongs to the endoribonuclease YbeY family. The cofactor is Zn(2+).

It is found in the cytoplasm. Its function is as follows. Single strand-specific metallo-endoribonuclease involved in late-stage 70S ribosome quality control and in maturation of the 3' terminus of the 16S rRNA. In Pseudomonas putida (strain ATCC 700007 / DSM 6899 / JCM 31910 / BCRC 17059 / LMG 24140 / F1), this protein is Endoribonuclease YbeY.